A 349-amino-acid chain; its full sequence is Fructose-1,6-bisphosphatase class 1 (349 aa).

Residues E92, D113, L115, and D116 each coordinate Mg(2+). Substrate is bound by residues 116–119 (DGSS), N209, Y242, and K272. Residue E278 participates in Mg(2+) binding.

It belongs to the FBPase class 1 family. As to quaternary structure, homotetramer. It depends on Mg(2+) as a cofactor.

It is found in the cytoplasm. It catalyses the reaction beta-D-fructose 1,6-bisphosphate + H2O = beta-D-fructose 6-phosphate + phosphate. It functions in the pathway carbohydrate biosynthesis; Calvin cycle. This Chloroherpeton thalassium (strain ATCC 35110 / GB-78) protein is Fructose-1,6-bisphosphatase class 1.